The primary structure comprises 339 residues: DNA-directed RNA polymerase subunit alpha (339 aa).

The alpha N-terminal domain (alpha-NTD) stretch occupies residues 1 to 235 (MVLQKNWQSL…DQLQLFINFD (235 aa)). Positions 251 to 339 (FNRNLLRKVD…DLAKRLDETF (89 aa)) are alpha C-terminal domain (alpha-CTD).

This sequence belongs to the RNA polymerase alpha chain family. As to quaternary structure, homodimer. The RNAP catalytic core consists of 2 alpha, 1 beta, 1 beta' and 1 omega subunit. When a sigma factor is associated with the core the holoenzyme is formed, which can initiate transcription.

It carries out the reaction RNA(n) + a ribonucleoside 5'-triphosphate = RNA(n+1) + diphosphate. Functionally, DNA-dependent RNA polymerase catalyzes the transcription of DNA into RNA using the four ribonucleoside triphosphates as substrates. The sequence is that of DNA-directed RNA polymerase subunit alpha from Gluconobacter oxydans (strain 621H) (Gluconobacter suboxydans).